The primary structure comprises 717 residues: Scinderin (717 aa).

An actin-severing region spans residues 1–363 (MAPERHPPAF…DGFGKVYVTE (363 aa)). The Gelsolin-like 1 repeat unit spans residues 28–108 (ELVPVPPSRH…IQGYESNEFV (81 aa)). A 1,2-diacyl-sn-glycero-3-phospho-(1D-myo-inositol-4,5-bisphosphate) is bound by residues 112-119 (KGGIKYKA) and 138-146 (RLLHIKGRR). 5 Gelsolin-like repeats span residues 148-220 (VRAT…PDEL), 265-340 (VVAE…TPIF), 408-483 (RVPV…PHLL), 526-590 (AEVD…EEFW), and 628-703 (IEEV…PPTF). The tract at residues 364–715 (RVAKIEQIEF…WFLAWDSNKW (352 aa)) is ca(2+)-dependent actin binding. Ca(2+)-binding residues include Asn538, Asp539, Glu562, Asp643, Asp644, and Glu666.

The protein belongs to the villin/gelsolin family.

The protein localises to the cytoplasm. It localises to the cytoskeleton. Its subcellular location is the cell projection. The protein resides in the podosome. In terms of biological role, ca(2+)-dependent actin filament-severing protein that has a regulatory function in exocytosis by affecting the organization of the microfilament network underneath the plasma membrane. In vitro, also has barbed end capping and nucleating activities in the presence of Ca(2+). Severing activity is inhibited by phosphatidylinositol 4,5-bis-phosphate (PIP2). Required for megakaryocyte differentiation, maturation, polyploidization and apoptosis with the release of platelet-like particles. Plays a role in osteoclastogenesis (OCG) and actin cytoskeletal organization in osteoclasts. Regulates chondrocyte proliferation and differentiation. Inhibits cell proliferation and tumorigenesis. Signaling is mediated by MAPK, p38 and JNK pathways. In Gallus gallus (Chicken), this protein is Scinderin (SCIN).